We begin with the raw amino-acid sequence, 260 residues long: Phosphate import ATP-binding protein PstB (260 aa).

Positions 14 to 255 constitute an ABC transporter domain; it reads VQVKNLAFYY…PRNKQTEDYI (242 aa). 46-53 is an ATP binding site; the sequence is GPSGCGKS.

The protein belongs to the ABC transporter superfamily. Phosphate importer (TC 3.A.1.7) family. The complex is composed of two ATP-binding proteins (PstB), two transmembrane proteins (PstC and PstA) and a solute-binding protein (PstS).

It localises to the cell inner membrane. It catalyses the reaction phosphate(out) + ATP + H2O = ADP + 2 phosphate(in) + H(+). In terms of biological role, part of the ABC transporter complex PstSACB involved in phosphate import. Responsible for energy coupling to the transport system. The chain is Phosphate import ATP-binding protein PstB from Syntrophotalea carbinolica (strain DSM 2380 / NBRC 103641 / GraBd1) (Pelobacter carbinolicus).